Reading from the N-terminus, the 210-residue chain is Ribosomal RNA small subunit methyltransferase G (210 aa).

S-adenosyl-L-methionine-binding positions include Gly-80, Leu-85, 131-132 (VE), and Arg-146.

Belongs to the methyltransferase superfamily. RNA methyltransferase RsmG family.

It localises to the cytoplasm. The enzyme catalyses guanosine(527) in 16S rRNA + S-adenosyl-L-methionine = N(7)-methylguanosine(527) in 16S rRNA + S-adenosyl-L-homocysteine. Specifically methylates the N7 position of guanine in position 527 of 16S rRNA. This chain is Ribosomal RNA small subunit methyltransferase G, found in Pasteurella multocida (strain Pm70).